Consider the following 121-residue polypeptide: Small ribosomal subunit protein uS13 (121 aa).

The segment at 94 to 121 (GLPVRGQNTKNNARTRKGPRRTVANKKK) is disordered. Basic residues predominate over residues 106–121 (ARTRKGPRRTVANKKK).

Belongs to the universal ribosomal protein uS13 family. In terms of assembly, part of the 30S ribosomal subunit. Forms a loose heterodimer with protein S19. Forms two bridges to the 50S subunit in the 70S ribosome.

Functionally, located at the top of the head of the 30S subunit, it contacts several helices of the 16S rRNA. In the 70S ribosome it contacts the 23S rRNA (bridge B1a) and protein L5 of the 50S subunit (bridge B1b), connecting the 2 subunits; these bridges are implicated in subunit movement. Contacts the tRNAs in the A and P-sites. This is Small ribosomal subunit protein uS13 from Geobacillus kaustophilus (strain HTA426).